The sequence spans 86 residues: Small ribosomal subunit protein bS20 (86 aa).

The disordered stretch occupies residues 1-21; it reads MANTKSAIKAARKSLRLHDRN.

The protein belongs to the bacterial ribosomal protein bS20 family.

Functionally, binds directly to 16S ribosomal RNA. The sequence is that of Small ribosomal subunit protein bS20 from Opitutus terrae (strain DSM 11246 / JCM 15787 / PB90-1).